The primary structure comprises 227 residues: MAYPMQLGLQDATSPIMEELTDFHDHTLMIVFLISTLVLYIISLMLTTKLTHTNTMDAQEVETVWTILPAIILIMIALPSLRILYMMDEINDPYLTVKTMGHQWYWSYEYTDYEDLMFDSYMIATSDLKPGGLRLLEVDNRVVLPMELPVRMLVSSEDVLHSWAVPSLGLKTDAIPGRLNQATLISSRPGLYYGQCSEICGANHSFMPIVLEMVPLKQFESWTSSMT.

The Mitochondrial intermembrane segment spans residues 1-14 (MAYPMQLGLQDATS). The helical transmembrane segment at 15–45 (PIMEELTDFHDHTLMIVFLISTLVLYIISLM) threads the bilayer. The Mitochondrial matrix segment spans residues 46-59 (LTTKLTHTNTMDAQ). Residues 60-87 (EVETVWTILPAIILIMIALPSLRILYMM) form a helical membrane-spanning segment. At 88 to 227 (DEINDPYLTV…QFESWTSSMT (140 aa)) the chain is on the mitochondrial intermembrane side. Positions 161, 196, 198, 200, 204, and 207 each coordinate Cu cation. Glutamate 198 provides a ligand contact to Mg(2+).

This sequence belongs to the cytochrome c oxidase subunit 2 family. As to quaternary structure, component of the cytochrome c oxidase (complex IV, CIV), a multisubunit enzyme composed of 14 subunits. The complex is composed of a catalytic core of 3 subunits MT-CO1, MT-CO2 and MT-CO3, encoded in the mitochondrial DNA, and 11 supernumerary subunits COX4I, COX5A, COX5B, COX6A, COX6B, COX6C, COX7A, COX7B, COX7C, COX8 and NDUFA4, which are encoded in the nuclear genome. The complex exists as a monomer or a dimer and forms supercomplexes (SCs) in the inner mitochondrial membrane with NADH-ubiquinone oxidoreductase (complex I, CI) and ubiquinol-cytochrome c oxidoreductase (cytochrome b-c1 complex, complex III, CIII), resulting in different assemblies (supercomplex SCI(1)III(2)IV(1) and megacomplex MCI(2)III(2)IV(2)). Found in a complex with TMEM177, COA6, COX18, COX20, SCO1 and SCO2. Interacts with TMEM177 in a COX20-dependent manner. Interacts with COX20. Interacts with COX16. Cu cation serves as cofactor.

Its subcellular location is the mitochondrion inner membrane. The enzyme catalyses 4 Fe(II)-[cytochrome c] + O2 + 8 H(+)(in) = 4 Fe(III)-[cytochrome c] + 2 H2O + 4 H(+)(out). Its function is as follows. Component of the cytochrome c oxidase, the last enzyme in the mitochondrial electron transport chain which drives oxidative phosphorylation. The respiratory chain contains 3 multisubunit complexes succinate dehydrogenase (complex II, CII), ubiquinol-cytochrome c oxidoreductase (cytochrome b-c1 complex, complex III, CIII) and cytochrome c oxidase (complex IV, CIV), that cooperate to transfer electrons derived from NADH and succinate to molecular oxygen, creating an electrochemical gradient over the inner membrane that drives transmembrane transport and the ATP synthase. Cytochrome c oxidase is the component of the respiratory chain that catalyzes the reduction of oxygen to water. Electrons originating from reduced cytochrome c in the intermembrane space (IMS) are transferred via the dinuclear copper A center (CU(A)) of subunit 2 and heme A of subunit 1 to the active site in subunit 1, a binuclear center (BNC) formed by heme A3 and copper B (CU(B)). The BNC reduces molecular oxygen to 2 water molecules using 4 electrons from cytochrome c in the IMS and 4 protons from the mitochondrial matrix. The polypeptide is Cytochrome c oxidase subunit 2 (MT-CO2) (Cratogeomys castanops (Yellow-faced pocket gopher)).